Consider the following 165-residue polypeptide: Lipoprotein signal peptidase (165 aa).

Transmembrane regions (helical) follow at residues 12–32, 70–90, and 102–122; these read WLWLVVVVLIVDLGSKALILQ, WFFAGIAIGICVLLVVMMYRA, and ALIIGGALGNLFDRLWHGFVV. Active-site residues include Asp123 and Asp141. Residues 137–157 traverse the membrane as a helical segment; it reads FNLADTAICIGAALVVLEGFL.

This sequence belongs to the peptidase A8 family.

The protein resides in the cell inner membrane. It catalyses the reaction Release of signal peptides from bacterial membrane prolipoproteins. Hydrolyzes -Xaa-Yaa-Zaa-|-(S,diacylglyceryl)Cys-, in which Xaa is hydrophobic (preferably Leu), and Yaa (Ala or Ser) and Zaa (Gly or Ala) have small, neutral side chains.. It functions in the pathway protein modification; lipoprotein biosynthesis (signal peptide cleavage). This protein specifically catalyzes the removal of signal peptides from prolipoproteins. The sequence is that of Lipoprotein signal peptidase from Cronobacter sakazakii (strain ATCC BAA-894) (Enterobacter sakazakii).